We begin with the raw amino-acid sequence, 546 residues long: 2-succinyl-5-enolpyruvyl-6-hydroxy-3-cyclohexene-1-carboxylate synthase (546 aa).

The protein belongs to the TPP enzyme family. MenD subfamily. In terms of assembly, homodimer. The cofactor is Mg(2+). Mn(2+) is required as a cofactor. It depends on thiamine diphosphate as a cofactor.

It catalyses the reaction isochorismate + 2-oxoglutarate + H(+) = 5-enolpyruvoyl-6-hydroxy-2-succinyl-cyclohex-3-ene-1-carboxylate + CO2. Its pathway is quinol/quinone metabolism; 1,4-dihydroxy-2-naphthoate biosynthesis; 1,4-dihydroxy-2-naphthoate from chorismate: step 2/7. It participates in quinol/quinone metabolism; menaquinone biosynthesis. Its function is as follows. Catalyzes the thiamine diphosphate-dependent decarboxylation of 2-oxoglutarate and the subsequent addition of the resulting succinic semialdehyde-thiamine pyrophosphate anion to isochorismate to yield 2-succinyl-5-enolpyruvyl-6-hydroxy-3-cyclohexene-1-carboxylate (SEPHCHC). The protein is 2-succinyl-5-enolpyruvyl-6-hydroxy-3-cyclohexene-1-carboxylate synthase of Mycolicibacterium smegmatis (strain ATCC 700084 / mc(2)155) (Mycobacterium smegmatis).